The following is a 180-amino-acid chain: Translation initiation factor IF-3 (180 aa).

This sequence belongs to the IF-3 family. Monomer.

The protein resides in the cytoplasm. In terms of biological role, IF-3 binds to the 30S ribosomal subunit and shifts the equilibrium between 70S ribosomes and their 50S and 30S subunits in favor of the free subunits, thus enhancing the availability of 30S subunits on which protein synthesis initiation begins. The sequence is that of Translation initiation factor IF-3 from Xylella fastidiosa (strain Temecula1 / ATCC 700964).